The following is a 421-amino-acid chain: Nuclear envelope integral membrane protein 2 (421 aa).

Positions 1–22 (MPPGSWWLVLWLPPLATLPAGA) are cleaved as a signal peptide. 5 helical membrane passes run 147-167 (NVVD…FFYA), 175-195 (VFYY…FVLL), 206-226 (TFGA…CQLM), 232-252 (LWCG…LCSF), and 279-299 (LVLV…MILL).

Belongs to the NEMP family.

The protein resides in the nucleus inner membrane. This is Nuclear envelope integral membrane protein 2 (Nemp2) from Rattus norvegicus (Rat).